The following is an 86-amino-acid chain: Small ribosomal subunit protein bS20 (86 aa).

A disordered region spans residues 1–25 (MANIKSQQKRNRTNERARLRNKAVK).

It belongs to the bacterial ribosomal protein bS20 family.

In terms of biological role, binds directly to 16S ribosomal RNA. This is Small ribosomal subunit protein bS20 from Mycobacterium bovis (strain ATCC BAA-935 / AF2122/97).